The primary structure comprises 156 residues: Transcriptional repressor NrdR (156 aa).

A zinc finger spans residues 3 to 34; it reads CPKCNSTHSRVVDSRHADEVNAIRRRRECEEC. Positions 49–139 constitute an ATP-cone domain; the sequence is LIVVKKDGTR…VYKEFKDVDQ (91 aa).

This sequence belongs to the NrdR family. The cofactor is Zn(2+).

Functionally, negatively regulates transcription of bacterial ribonucleotide reductase nrd genes and operons by binding to NrdR-boxes. In Staphylococcus saprophyticus subsp. saprophyticus (strain ATCC 15305 / DSM 20229 / NCIMB 8711 / NCTC 7292 / S-41), this protein is Transcriptional repressor NrdR.